A 357-amino-acid chain; its full sequence is MKEYKVAVIPGDGIGVEIVGEALKVLEKVGAKYDTKFNFTEVKAGGCAIDEFGVPLPNETLEICKNSDAVLLGAVGGPKWDTLPGEKRPEKALMGLRGGLGLYANLRPAKVYDILKSASPLKEEIINKGVDLLVVRELTGGIYFGERGRDIQNGINSAYDTERYNVEEIKRIAHVAFKAALKRNKKVTSVDKANILESSRLWRETVTEVAKEYPEVELNYLYVDNAAMQLVREPSQFDVIVTSNIFGDILTDEASMVTGSIGMLPSASLRNDTFGMYEPIHGSAPDIAGQDLANPLAQILSVAMMLEYSFNMTEAARDVEDAVEKVLNSGYRTGDIYTEGSKKVGTKEMGKLVLAEL.

Gly-77–Glu-90 is a binding site for NAD(+). Residues Arg-97, Arg-107, Arg-136, and Asp-224 each coordinate substrate. Mg(2+)-binding residues include Asp-224, Asp-248, and Asp-252. Gly-282 to Asn-294 provides a ligand contact to NAD(+).

Belongs to the isocitrate and isopropylmalate dehydrogenases family. LeuB type 1 subfamily. In terms of assembly, homodimer. Requires Mg(2+) as cofactor. Mn(2+) is required as a cofactor.

The protein resides in the cytoplasm. It carries out the reaction (2R,3S)-3-isopropylmalate + NAD(+) = 4-methyl-2-oxopentanoate + CO2 + NADH. It functions in the pathway amino-acid biosynthesis; L-leucine biosynthesis; L-leucine from 3-methyl-2-oxobutanoate: step 3/4. Catalyzes the oxidation of 3-carboxy-2-hydroxy-4-methylpentanoate (3-isopropylmalate) to 3-carboxy-4-methyl-2-oxopentanoate. The product decarboxylates to 4-methyl-2 oxopentanoate. The polypeptide is 3-isopropylmalate dehydrogenase (Clostridium acetobutylicum (strain ATCC 824 / DSM 792 / JCM 1419 / IAM 19013 / LMG 5710 / NBRC 13948 / NRRL B-527 / VKM B-1787 / 2291 / W)).